The chain runs to 296 residues: Mycothiol acetyltransferase (296 aa).

N-acetyltransferase domains are found at residues arginine 8 to glutamate 146 and isoleucine 151 to valine 296. Position 39 (glutamate 39) interacts with 1D-myo-inositol 2-(L-cysteinylamino)-2-deoxy-alpha-D-glucopyranoside. Valine 76–threonine 78 serves as a coordination point for acetyl-CoA. Positions 178, 220, and 228 each coordinate 1D-myo-inositol 2-(L-cysteinylamino)-2-deoxy-alpha-D-glucopyranoside. Residues valine 232–valine 234 and glutamine 239–arginine 245 each bind acetyl-CoA. Tyrosine 266 contributes to the 1D-myo-inositol 2-(L-cysteinylamino)-2-deoxy-alpha-D-glucopyranoside binding site.

The protein belongs to the acetyltransferase family. MshD subfamily. In terms of assembly, monomer.

The enzyme catalyses 1D-myo-inositol 2-(L-cysteinylamino)-2-deoxy-alpha-D-glucopyranoside + acetyl-CoA = mycothiol + CoA + H(+). Catalyzes the transfer of acetyl from acetyl-CoA to desacetylmycothiol (Cys-GlcN-Ins) to form mycothiol. This chain is Mycothiol acetyltransferase, found in Kytococcus sedentarius (strain ATCC 14392 / DSM 20547 / JCM 11482 / CCUG 33030 / NBRC 15357 / NCTC 11040 / CCM 314 / 541) (Micrococcus sedentarius).